The primary structure comprises 385 residues: Phosphate acyltransferase (385 aa).

Over residues 1–17 (MAAGTSIGTTPGGSTSP) the composition is skewed to low complexity. The segment at 1 to 28 (MAAGTSIGTTPGGSTSPETPPEHGLTGT) is disordered.

It belongs to the PlsX family. Homodimer. Probably interacts with PlsY.

It localises to the cytoplasm. It carries out the reaction a fatty acyl-[ACP] + phosphate = an acyl phosphate + holo-[ACP]. It participates in lipid metabolism; phospholipid metabolism. In terms of biological role, catalyzes the reversible formation of acyl-phosphate (acyl-PO(4)) from acyl-[acyl-carrier-protein] (acyl-ACP). This enzyme utilizes acyl-ACP as fatty acyl donor, but not acyl-CoA. The sequence is that of Phosphate acyltransferase from Dinoroseobacter shibae (strain DSM 16493 / NCIMB 14021 / DFL 12).